Consider the following 483-residue polypeptide: Zinc metalloproteinase/disintegrin (483 aa).

A signal peptide spans 1 to 20; it reads MIQVLLVTICLAVFPYQGSS. A propeptide spanning residues 21–190 is cleaved from the precursor; the sequence is IILESGNVND…KASQLYLTPE (170 aa). The region spanning 197–395 is the Peptidase M12B domain; it reads RYIELAIVVD…RNPQCILNAP (199 aa). E200 lines the Ca(2+) pocket. N263 carries an N-linked (GlcNAc...) asparagine glycan. A Ca(2+)-binding site is contributed by D284. N-linked (GlcNAc...) asparagine glycosylation is present at N293. 3 disulfides stabilise this stretch: C308/C390, C352/C374, and C354/C357. Position 333 (H333) interacts with Zn(2+). The active site involves E334. H337 and H343 together coordinate Zn(2+). 2 residues coordinate Ca(2+): C390 and N393. Positions 396 to 413 are excised as a propeptide; the sequence is LRTDTVSTPVSGNEFLEA. In terms of domain architecture, Disintegrin spans 403 to 483; sequence TPVSGNEFLE…SNDCPRWNDL (81 aa). 6 disulfide bridges follow: C417–C432, C419–C427, C426–C449, C440–C446, C445–C470, and C458–C477. Residues 462–464 carry the Cell attachment site motif; that stretch reads RGD.

It belongs to the venom metalloproteinase (M12B) family. P-II subfamily. P-IIa sub-subfamily. In terms of assembly, monomeric (disintegrin). Zn(2+) serves as cofactor. Expressed by the venom gland.

It is found in the secreted. Impairs hemostasis in the envenomed animal. In terms of biological role, inhibits platelet aggregation induced by ADP, thrombin, platelet-activating factor and collagen. Acts by inhibiting fibrinogen interaction with platelet receptors GPIIb/GPIIIa (ITGA2B/ITGB3). This Protobothrops flavoviridis (Habu) protein is Zinc metalloproteinase/disintegrin.